Reading from the N-terminus, the 198-residue chain is Dephospho-CoA kinase (198 aa).

In terms of domain architecture, DPCK spans I4–E198. A12 to T17 is an ATP binding site.

The protein belongs to the CoaE family.

The protein resides in the cytoplasm. It carries out the reaction 3'-dephospho-CoA + ATP = ADP + CoA + H(+). It functions in the pathway cofactor biosynthesis; coenzyme A biosynthesis; CoA from (R)-pantothenate: step 5/5. Its function is as follows. Catalyzes the phosphorylation of the 3'-hydroxyl group of dephosphocoenzyme A to form coenzyme A. The sequence is that of Dephospho-CoA kinase from Streptococcus mutans serotype c (strain ATCC 700610 / UA159).